Reading from the N-terminus, the 148-residue chain is Large ribosomal subunit protein uL15 (148 aa).

Residues 1–30 (MPSRLRKTRKLRGHVSHGHGRIGKHRKHPG) are compositionally biased toward basic residues. Residues 1–37 (MPSRLRKTRKLRGHVSHGHGRIGKHRKHPGGRGNAGG) are disordered. Position 39 is a (3S)-3-hydroxyhistidine (His39). 2 positions are modified to N6-acetyllysine: Lys47 and Lys55. Ser68 carries the phosphoserine modification. Position 110 is an N6-acetyllysine (Lys110).

It belongs to the universal ribosomal protein uL15 family. In terms of assembly, component of the large ribosomal subunit. Hydroxylated on His-39 by MINA.

The protein localises to the cytoplasm. In terms of biological role, component of the large ribosomal subunit. The ribosome is a large ribonucleoprotein complex responsible for the synthesis of proteins in the cell. In Mus musculus (Mouse), this protein is Large ribosomal subunit protein uL15 (Rpl27a).